A 431-amino-acid polypeptide reads, in one-letter code: MGTHINFNNLGGGGHPGGEGSSNQMKPTGSVMPLARQSSVYSLTFDELQNTLGGPGKDFGSMNMDELLKSIWTAEEAQAMAMTSAPAATAVAQPGAGIPPPGGNLQRQGSLTLPRTISQKTVDEVWKCLITKDGNMEGSSGGGGESNVPPGRQQTLGEMTLEEFLFRAGVVREDNCVQQMGQVNGNNNNGFYGNSTAAGGLGFGFGQPNQNSITFNGTNDSMILNQPPGLGLKMGGTMQQQQQQQQLLQQQQQQMQQLNQPHPQQRLPQTIFPKQANVAFSAPVNITNKGFAGAANNSINNNNGLASYGGTGVTVAATSPGTSSAENNSLSPVPYVLNRGRRSNTGLEKVIERRQRRMIKNRESAARSRARKQAYTLELEAEIEKLKKTNQELQKKQAEMVEMQKNELKETSKRPWGSKRQCLRRTLTGPW.

Residues 1–29 (MGTHINFNNLGGGGHPGGEGSSNQMKPTG) are disordered. Residues 10-20 (LGGGGHPGGEG) show a composition bias toward gly residues. Phosphoserine is present on residues serine 39 and serine 61. Serine 110 carries the phosphoserine; by CPK32 modification. The interval 133–153 (DGNMEGSSGGGGESNVPPGRQ) is disordered. Threonine 155 is subject to Phosphothreonine. Positions 319–331 (SPGTSSAENNSLS) are enriched in polar residues. Residues 319 to 338 (SPGTSSAENNSLSPVPYVLN) are disordered. The Nuclear localization signal signature appears at 340–347 (GRRSNTGL). Positions 351–414 (IERRQRRMIK…KNELKETSKR (64 aa)) constitute a bZIP domain. The basic motif stretch occupies residues 353–372 (RRQRRMIKNRESAARSRARK). Residues 372 to 411 (KQAYTLELEAEIEKLKKTNQELQKKQAEMVEMQKNELKET) adopt a coiled-coil conformation. A leucine-zipper region spans residues 379–393 (LEAEIEKLKKTNQEL).

The protein belongs to the bZIP family. ABI5 subfamily. As to quaternary structure, DNA-binding heterodimer. Interacts with CPK32 and the AFP proteins AFP1, AFP2 and AFP3. Interacts with FREE1 (via C-terminus). In terms of processing, phosphorylated by CPK4 and CPK11 in vitro. In terms of tissue distribution, expressed in roots, leaves, flowers and immatures siliques.

Its subcellular location is the nucleus. Its function is as follows. Functions as a transcriptional activator in the ABA-inducible expression of LTI65/RD29B (AC Q04980). Binds specifically to the ABA-responsive element (ABRE) of the LTI65/RD29B (AC Q04980) gene promoter. Binds to the promoter of FREE1 and activates its transcription. This chain is ABSCISIC ACID-INSENSITIVE 5-like protein 7, found in Arabidopsis thaliana (Mouse-ear cress).